Here is a 110-residue protein sequence, read N- to C-terminus: MGVVRSLLLFVVAAVTEIGGAWLVWQGVREHRGPVWVGLGIGFLAAYGFVATLQPDAHFGRILAAYGGVFVAGSLLWGVAVDGFRPDRYDLAGAAICLLGVAVIMYARRV.

4 helical membrane-spanning segments follow: residues 8 to 28, 33 to 53, 62 to 82, and 87 to 107; these read LLFV…WQGV, GPVW…VATL, ILAA…VAVD, and DRYD…IMYA.

The protein belongs to the UPF0060 family.

The protein localises to the cell membrane. The chain is UPF0060 membrane protein Francci3_2786 from Frankia casuarinae (strain DSM 45818 / CECT 9043 / HFP020203 / CcI3).